We begin with the raw amino-acid sequence, 532 residues long: Flavin-containing monooxygenase 1 (532 aa).

At Ala2 the chain carries N-acetylalanine. Residues 2 to 510 (AKRVAIVGAG…TRIVQESPTP (509 aa)) are Lumenal-facing. FAD is bound by residues 9-13 (GAGVS), Glu32, 40-41 (LW), and 61-62 (NS). NADP(+) is bound by residues 60 to 61 (SN) and 195 to 198 (SGTD). Residues 511–531 (FASLLKLLSLLALLMAIFLIF) traverse the membrane as a helical segment. A topological domain (cytoplasmic) is located at residue Leu532.

Belongs to the FMO family. Requires FAD as cofactor. Liver.

It is found in the endoplasmic reticulum membrane. The catalysed reaction is hypotaurine + NADPH + O2 + H(+) = taurine + NADP(+) + H2O. It catalyses the reaction hypotaurine + NADH + O2 + H(+) = taurine + NAD(+) + H2O. It carries out the reaction trimethylamine + NADPH + O2 = trimethylamine N-oxide + NADP(+) + H2O. The enzyme catalyses N,N-dimethylaniline + NADPH + O2 + H(+) = N,N-dimethylaniline N-oxide + NADP(+) + H2O. In terms of biological role, broad spectrum monooxygenase that catalyzes the oxygenation of a wide variety of nitrogen- and sulfur-containing compounds including xenobiotics. Catalyzes the S-oxygenation of hypotaurine to produce taurine, an organic osmolyte involved in cell volume regulation as well as a variety of cytoprotective and developmental processes. In vitro, catalyzes the N-oxygenation of trimethylamine (TMA) to produce trimethylamine N-oxide (TMAO) and could therefore participate to the detoxification of this compound that is generated by the action of gut microbiota from dietary precursors such as choline, choline containing compounds, betaine or L-carnitine. This Canis lupus familiaris (Dog) protein is Flavin-containing monooxygenase 1 (FMO1).